The primary structure comprises 1876 residues: Phenolphthiocerol/phthiocerol polyketide synthase subunit A (1876 aa).

Residues 9-83 enclose the Carrier 1 domain; that stretch reads ADLRHWLIDY…ALAAYLAAPE (75 aa). Position 43 is an O-(pantetheine 4'-phosphoryl)serine (Ser-43). Positions 101–526 constitute a Ketosynthase family 3 (KS3) domain; the sequence is DEPIAVVGMG…GTNAHVVIEQ (426 aa). Active-site for beta-ketoacyl synthase activity residues include Cys-273, His-408, and His-448. Residues 624–950 are acyltransferase; it reads EGSPGPGTVF…NLNKAHTIHP (327 aa). The For malonyltransferase activity role is filled by Ser-720. The N-terminal hotdog fold stretch occupies residues 997–1112; sequence HTTVATVSAS…AQLSSSPSDS (116 aa). The 271-residue stretch at 997 to 1267 folds into the PKS/mFAS DH domain; it reads HTTVATVSAS…YRALDFGLDV (271 aa). Catalysis depends on His-1027, which acts as the Proton acceptor; for dehydratase activity. The interval 1104–1130 is disordered; sequence QLSSSPSDSASSLNEHHRANGQPPERA. Residues 1106 to 1115 are compositionally biased toward low complexity; that stretch reads SSSPSDSASS. The C-terminal hotdog fold stretch occupies residues 1130–1267; the sequence is AHRDLIPDLA…YRALDFGLDV (138 aa). The active-site Proton donor; for dehydratase activity is Asp-1186. The tract at residues 1491–1728 is beta-ketoacyl reductase; that stretch reads AAYLITGGLG…DGYDVAQAVV (238 aa). NADP(+) is bound at residue 1492-1551; the sequence is AYLITGGLGALGLLMADWLADRGAHRLVLTGRTPLPPRRDWQLDTLDTELRRRIDAIRAL. The region spanning 1759–1836 is the Carrier 2 domain; the sequence is EVRSELEQGL…SLASYLAKRV (78 aa). Residue Ser-1796 is modified to O-(pantetheine 4'-phosphoryl)serine.

NADP(+) is required as a cofactor. The cofactor is pantetheine 4'-phosphate.

It carries out the reaction icosanoyl-[(phenol)carboxyphthiodiolenone synthase] + 2 (S)-methylmalonyl-CoA + 3 malonyl-CoA + 5 NADPH + 10 H(+) = C32-carboxyphthiodiolenone-[(phenol)carboxyphthiodiolenone synthase] + 5 CO2 + 5 NADP(+) + 5 CoA + 2 H2O. It catalyses the reaction docosanoyl-[(phenol)carboxyphthiodiolenone synthase] + 2 (S)-methylmalonyl-CoA + 3 malonyl-CoA + 5 NADPH + 10 H(+) = C34-carboxyphthiodiolenone-[(phenol)carboxyphthiodiolenone synthase] + 5 CO2 + 5 NADP(+) + 5 CoA + 2 H2O. The enzyme catalyses 17-(4-hydroxyphenyl)heptadecanoyl-[(phenol)carboxyphthiodiolenone synthase] + 2 (S)-methylmalonyl-CoA + 3 malonyl-CoA + 5 NADPH + 10 H(+) = C35-(phenol)carboxyphthiodiolenone-[(phenol)carboxyphthiodiolenone synthase] + 5 CO2 + 5 NADP(+) + 5 CoA + 2 H2O. The catalysed reaction is 19-(4-hydroxyphenyl)nonadecanoyl-[(phenol)carboxyphthiodiolenone synthase] + 2 (S)-methylmalonyl-CoA + 3 malonyl-CoA + 5 NADPH + 10 H(+) = C37-(phenol)carboxyphthiodiolenone-[(phenol)carboxyphthiodiolenone synthase] + 5 CO2 + 5 NADP(+) + 5 CoA + 2 H2O. It participates in lipid metabolism; fatty acid biosynthesis. Part of the PpsABCDE complex involved in the biosynthesis of the lipid core common to phthiocerols and phenolphthiocerols by successive additions of malonyl-CoA or methylmalonyl-CoA extender units. PpsA can accept as substrate the activated forms of either icosanoyl (C20), docosanoyl (C22) or lignoceroyl (C24) groups from FadD26, or a (4-hydroxyphenyl)-C17 or (4-hydroxyphenyl)-C19 fatty acyl from FadD29. PpsA initiates the biosynthesis and extends its substrate using a malonyl-CoA extender unit. The PpsB and PpsC proteins add the second and third malonyl-CoA extender units. PpsD adds an (R)-methylmalonyl unit and PpsE adds a second (R)-methylmalonyl unit. The incorporation of the methylmalonyl units results in formation of two branched methyl groups in the elongated product. This chain is Phenolphthiocerol/phthiocerol polyketide synthase subunit A (ppsA), found in Mycobacterium bovis (strain ATCC BAA-935 / AF2122/97).